We begin with the raw amino-acid sequence, 1228 residues long: Membrane-anchored lipid-binding protein LAM1 (1228 aa).

The Cytoplasmic segment spans residues methionine 1–lysine 1062. One can recognise a PH domain in the interval glutamate 308–arginine 421. Residues glutamate 773–asparagine 978 form the VASt domain. The helical transmembrane segment at threonine 1063–isoleucine 1083 threads the bilayer. Topologically, residues histidine 1084 to valine 1228 are lumenal. Asparagine 1205 carries N-linked (GlcNAc...) asparagine glycosylation.

The protein belongs to the SIP3 family.

The protein resides in the mitochondrion membrane. Its subcellular location is the endoplasmic reticulum membrane. Involved in mitochondrial fragmentation during programmed cell death in response to high levels of alpha-factor mating pheromone or the drug amiodarone. May be involved in sterol transfer between intracellular membranes. This Saccharomyces cerevisiae (strain ATCC 204508 / S288c) (Baker's yeast) protein is Membrane-anchored lipid-binding protein LAM1.